Reading from the N-terminus, the 383-residue chain is Delta(12) fatty acid desaturase FAD2 (383 aa).

A disordered region spans residues 1 to 29 (MGAGGRMQDPTNGGNKTEPEPIQRVPHEK). The span at 17–29 (TEPEPIQRVPHEK) shows a compositional bias: basic and acidic residues. The next 2 membrane-spanning stretches (helical) occupy residues 50–70 (VIRS…LYYI) and 85–105 (VAWP…WVIA). Residues 106-110 (HECGH) carry the Histidine box-1 motif. Residues 118–138 (WLDDTVGLVLHSFLLVPYFSW) traverse the membrane as a helical segment. Residues 142–146 (HRRHH) carry the Histidine box-2 motif. The next 3 helical transmembrane spans lie at 180–200 (ILTL…FNVS), 226–246 (IFIS…LAMT), and 252–272 (VLTM…LITF). Residues 316–320 (HVAHH) carry the Histidine box-3 motif.

This sequence belongs to the fatty acid desaturase type 1 family. Expressed in leaves, flower buds and developing seeds.

Its subcellular location is the membrane. The protein operates within lipid metabolism; polyunsaturated fatty acid biosynthesis. Its function is as follows. Catalyzes the desaturation of oleic acid to linoleic acid. Introduces a double bond at position 12 of 16:1(9Z) and 18:1(9Z). The protein is Delta(12) fatty acid desaturase FAD2 of Calendula officinalis (Pot marigold).